Here is a 465-residue protein sequence, read N- to C-terminus: Serine/threonine-protein kinase 38 (465 aa).

Residue Ala-2 is modified to N-acetylalanine. Residues 62-87 (KRLRRSAHARKETEFLRLKRTRLGLE) are interaction with S100B. Thr-74 carries the post-translational modification Phosphothreonine. The Protein kinase domain maps to 89-382 (FESLKVIGRG…VEEIKSNSFF (294 aa)). Residues 95–103 (IGRGAFGEV) and Lys-118 each bind ATP. Asp-212 (proton acceptor) is an active-site residue. At Ser-264 the chain carries Phosphoserine. Residue Ser-281 is modified to Phosphoserine; by autocatalysis. Positions 306–311 (WSLGVI) match the UFM1-interacting motif (UFIM) motif. In terms of domain architecture, AGC-kinase C-terminal spans 383-455 (EGVDWEHIRE…KRFEGLTARG (73 aa)). Thr-444 carries the post-translational modification Phosphothreonine; by STK24/MST3.

It belongs to the protein kinase superfamily. AGC Ser/Thr protein kinase family. As to quaternary structure, homodimeric S100B binds two molecules of STK38. Interacts with MOB1 and MOB2. Interacts with MAP3K1 and MAP3K2 (via the kinase catalytic domain). Forms a tripartite complex with MOBKL1B and STK3/MST2. Interacts with MICAL1; leading to inhibit the protein kinase activity by antagonizing activation by MST1/STK4. Requires Mg(2+) as cofactor. Post-translationally, ISGylated. Phosphorylated by STK3/MST2 and this is enhanced by MOBKL1B. In terms of tissue distribution, ubiquitously expressed with highest levels observed in peripheral blood leukocytes.

It is found in the nucleus. The protein resides in the cytoplasm. The protein localises to the chromosome. The enzyme catalyses L-seryl-[protein] + ATP = O-phospho-L-seryl-[protein] + ADP + H(+). It catalyses the reaction L-threonyl-[protein] + ATP = O-phospho-L-threonyl-[protein] + ADP + H(+). Its activity is regulated as follows. Activated by binding of S100B which releases autoinhibitory N-lobe interactions, enabling ATP to bind and the autophosphorylation of Ser-281. Thr-444 then undergoes calcium-dependent phosphorylation by STK24/MST3. Interactions between phosphorylated Thr-444 and the N-lobe promote additional structural changes that complete the activation of the kinase. Autoinhibition is also released by the binding of MOB1/MOBKL1A and MOB2/HCCA2 to the N-terminal of STK38. Its function is as follows. Serine/threonine-protein kinase that acts as a negative regulator of MAP3K1/2 signaling. Converts MAP3K2 from its phosphorylated form to its non-phosphorylated form and inhibits autophosphorylation of MAP3K2. Acts as an ufmylation 'reader' in a kinase-independent manner: specifically recognizes and binds mono-ufmylated histone H4 in response to DNA damage, promoting the recruitment of SUV39H1 to the double-strand breaks, resulting in ATM activation. The protein is Serine/threonine-protein kinase 38 of Homo sapiens (Human).